The following is a 22-amino-acid chain: Sex pheromone inhibitor determinant (22 aa).

The propeptide occupies 1 to 14; the sequence is MSKRAMKKIIPLIT.

Its subcellular location is the secreted. In terms of biological role, acts as a competitive inhibitor of the CAD1 pheromone. This chain is Sex pheromone inhibitor determinant (iad), found in Enterococcus faecalis (strain ATCC 700802 / V583).